The primary structure comprises 537 residues: uncharacterized protein (537 aa).

This is an uncharacterized protein from Methanocaldococcus jannaschii (strain ATCC 43067 / DSM 2661 / JAL-1 / JCM 10045 / NBRC 100440) (Methanococcus jannaschii).